The following is a 911-amino-acid chain: Protein translocase subunit SecA (911 aa).

Residues Gln86, 104–108 (GEGKT), and Asp512 each bind ATP. A disordered region spans residues 869 to 888 (ALADDGQPQGAQPVRNVLPK). Zn(2+) contacts are provided by Cys895, Cys897, Cys906, and His907.

The protein belongs to the SecA family. Monomer and homodimer. Part of the essential Sec protein translocation apparatus which comprises SecA, SecYEG and auxiliary proteins SecDF-YajC and YidC. Requires Zn(2+) as cofactor.

It is found in the cell inner membrane. The protein resides in the cytoplasm. It carries out the reaction ATP + H2O + cellular proteinSide 1 = ADP + phosphate + cellular proteinSide 2.. Part of the Sec protein translocase complex. Interacts with the SecYEG preprotein conducting channel. Has a central role in coupling the hydrolysis of ATP to the transfer of proteins into and across the cell membrane, serving both as a receptor for the preprotein-SecB complex and as an ATP-driven molecular motor driving the stepwise translocation of polypeptide chains across the membrane. This is Protein translocase subunit SecA from Bordetella parapertussis (strain 12822 / ATCC BAA-587 / NCTC 13253).